The chain runs to 562 residues: NAD-dependent malic enzyme (562 aa).

Tyr101 (proton donor) is an active-site residue. An NAD(+)-binding site is contributed by Arg154. Catalysis depends on Lys172, which acts as the Proton acceptor. A divalent metal cation is bound by residues Glu243, Asp244, and Asp267. 2 residues coordinate NAD(+): Asp267 and Asn415.

This sequence belongs to the malic enzymes family. As to quaternary structure, homotetramer. It depends on Mg(2+) as a cofactor. The cofactor is Mn(2+).

The enzyme catalyses (S)-malate + NAD(+) = pyruvate + CO2 + NADH. It carries out the reaction oxaloacetate + H(+) = pyruvate + CO2. The chain is NAD-dependent malic enzyme from Shewanella pealeana (strain ATCC 700345 / ANG-SQ1).